A 489-amino-acid polypeptide reads, in one-letter code: Cysteine--tRNA ligase (489 aa).

C27 is a binding site for Zn(2+). The 'HIGH' region motif lies at V29–H39. Residues C211, H236, and E240 each contribute to the Zn(2+) site. Residues K268–S272 carry the 'KMSKS' region motif. K271 is a binding site for ATP.

It belongs to the class-I aminoacyl-tRNA synthetase family. As to quaternary structure, monomer. Zn(2+) serves as cofactor.

Its subcellular location is the cytoplasm. The catalysed reaction is tRNA(Cys) + L-cysteine + ATP = L-cysteinyl-tRNA(Cys) + AMP + diphosphate. The protein is Cysteine--tRNA ligase of Prochlorococcus marinus (strain MIT 9215).